A 186-amino-acid polypeptide reads, in one-letter code: Large ribosomal subunit protein uL5m (186 aa).

Belongs to the universal ribosomal protein uL5 family.

It is found in the mitochondrion. The sequence is that of Large ribosomal subunit protein uL5m (RPL5) from Solanum tuberosum (Potato).